A 28-amino-acid chain; its full sequence is Ornatin-D (28 aa).

The protein belongs to the ornatin family.

It localises to the secreted. Potent inhibitor of fibrinogen interaction with platelet receptors expressed on glycoprotein IIb-IIIa complex. May prevent blood from clotting during either feeding and/or storage of ingested blood. This chain is Ornatin-D, found in Placobdella ornata (Turtle leech).